A 169-amino-acid polypeptide reads, in one-letter code: uncharacterized protein (169 aa).

The N-terminal 91 residues, 1 to 91 (MFSSTFRRLA…NKEQYTVRCL (91 aa)), are a transit peptide targeting the mitochondrion. The interval 54–76 (PQPKSPGSLPSSTRTAPNPNGEE) is disordered. Residues 61–71 (SLPSSTRTAPN) are compositionally biased toward polar residues.

The protein resides in the mitochondrion. This is an uncharacterized protein from Trypanosoma brucei brucei (strain 927/4 GUTat10.1).